The primary structure comprises 365 residues: PHD finger protein 6 (365 aa).

Ser2 bears the N-acetylserine mark. Short sequence motifs (nuclear localization signal) lie at residues 13–16 and 129–133; these read RQRK and RKHKK. The segment at 14–52 adopts a C2HC pre-PHD-type 1 zinc-finger fold; that stretch reads QRKCGFCKSNRDKECGQLLISENQKVAAHHKCMLFSSAL. The extended PHD1 domain (ePHD1) stretch occupies residues 14-132; it reads QRKCGFCKSN…IYMVYCRKHK (119 aa). The segment at 80–132 adopts a PHD-type 1 zinc-finger fold; the sequence is LMCSLCHCPGATIGCDVKTCHRTYHYHCALHDKAQIREKPSQGIYMVYCRKHK. Ser138, Ser145, and Ser155 each carry phosphoserine. Residues 139–211 form a disordered region; it reads EADLEESFNE…RSSPSDTRPK (73 aa). Residues 157–169 carry the Nucleolar localization signal motif; the sequence is KSKKKSRKGRPRK. Residues 157 to 171 are compositionally biased toward basic residues; sequence KSKKKSRKGRPRKTN. Lys173 is covalently cross-linked (Glycyl lysine isopeptide (Lys-Gly) (interchain with G-Cter in SUMO2)). Phosphoserine occurs at positions 183 and 199. A C2HC pre-PHD-type 2 zinc finger spans residues 209–249; sequence RPKCGFCHVGEEENEARGKLHIFNAKKAAAHYKCMLFSSGT. The tract at residues 209-330 is extended PHD2 domain (ePHD2); that stretch reads RPKCGFCHVG…IYKLYCKNHS (122 aa). Lys227 participates in a covalent cross-link: Glycyl lysine isopeptide (Lys-Gly) (interchain with G-Cter in SUMO2). The segment at 278–330 adopts a PHD-type 2 zinc-finger fold; sequence MKCTLCSQPGATIGCEIKACVKTYHYHCGVQDKAKYIENMSRGIYKLYCKNHS. A disordered region spans residues 330–365; that stretch reads SGNDERDEEDEERESKSRGKVEIDQQQLTQQQLNGN. Residues 342–352 are compositionally biased toward basic and acidic residues; sequence RESKSRGKVEI. The span at 354–365 shows a compositional bias: low complexity; sequence QQQLTQQQLNGN. Thr358 is modified (phosphothreonine).

As to quaternary structure, interacts with UBTF. Interacts with the NuRD complex component RBBP4 (via the nucleolar localization motif), the interaction mediates transcriptional repression activity.

The protein resides in the nucleus. It is found in the nucleolus. It localises to the chromosome. The protein localises to the centromere. Its subcellular location is the kinetochore. In terms of biological role, transcriptional regulator that associates with ribosomal RNA promoters and suppresses ribosomal RNA (rRNA) transcription. This chain is PHD finger protein 6 (PHF6), found in Pongo abelii (Sumatran orangutan).